Here is a 306-residue protein sequence, read N- to C-terminus: Curved DNA-binding protein (306 aa).

The region spanning 5-69 is the J domain; it reads DYYAIMGVKP…QRRAEYDQLW (65 aa).

It localises to the cytoplasm. It is found in the nucleoid. DNA-binding protein that preferentially recognizes a curved DNA sequence. It is probably a functional analog of DnaJ; displays overlapping activities with DnaJ, but functions under different conditions, probably acting as a molecular chaperone in an adaptive response to environmental stresses other than heat shock. Lacks autonomous chaperone activity; binds native substrates and targets them for recognition by DnaK. Its activity is inhibited by the binding of CbpM. This chain is Curved DNA-binding protein, found in Salmonella arizonae (strain ATCC BAA-731 / CDC346-86 / RSK2980).